We begin with the raw amino-acid sequence, 108 residues long: UPF0235 protein RB8260 (108 aa).

Belongs to the UPF0235 family.

The sequence is that of UPF0235 protein RB8260 from Rhodopirellula baltica (strain DSM 10527 / NCIMB 13988 / SH1).